Consider the following 466-residue polypeptide: Coagulation factor VII (466 aa).

The signal sequence occupies residues Met-1–Ala-20. A propeptide spanning residues Ala-21–Arg-60 is cleaved from the precursor. The region spanning Ala-61–Ser-105 is the Gla domain. Residues Glu-66, Glu-67, Glu-74, Glu-76, Glu-79, Glu-80, Glu-85, Glu-86, Glu-89, and Glu-95 each carry the 4-carboxyglutamate modification. The cysteines at positions 77 and 82 are disulfide-linked. The 37-residue stretch at Asp-106–Glu-142 folds into the EGF-like 1; calcium-binding domain. Cystine bridges form between Cys-110–Cys-121, Cys-115–Cys-130, Cys-132–Cys-141, Cys-151–Cys-162, Cys-158–Cys-172, Cys-174–Cys-187, Cys-195–Cys-322, Cys-219–Cys-224, Cys-238–Cys-254, and Cys-370–Cys-389. Ser-112 carries an O-linked (Glc...) serine; alternate glycan. O-linked (Xyl...) serine; alternate glycosylation occurs at Ser-112. An O-linked (Fuc) serine glycan is attached at Ser-120. At Asp-123 the chain carries (3R)-3-hydroxyaspartate. Residues Asp-147–Thr-188 form the EGF-like 2 domain. Asn-205 carries N-linked (GlcNAc...) asparagine glycosylation. Positions Ile-213 to Arg-452 constitute a Peptidase S1 domain. Catalysis depends on charge relay system residues His-253 and Asp-302. N-linked (GlcNAc...) asparagine glycosylation is present at Asn-382. Substrate is bound at residue Asp-398. Cys-400 and Cys-428 are joined by a disulfide. The active-site Charge relay system is the Ser-404.

It belongs to the peptidase S1 family. In terms of assembly, heterodimer of a light chain and a heavy chain linked by a disulfide bond. The vitamin K-dependent, enzymatic carboxylation of some glutamate residues allows the modified protein to bind calcium. In terms of processing, the iron and 2-oxoglutarate dependent 3-hydroxylation of aspartate and asparagine is (R) stereospecific within EGF domains. Post-translationally, O-glycosylated. O-fucosylated by POFUT1 on a conserved serine or threonine residue found in the consensus sequence C2-X(4,5)-[S/T]-C3 of EGF domains, where C2 and C3 are the second and third conserved cysteines. Can be either O-glucosylated or O-xylosylated at Ser-112 by POGLUT1.

The protein localises to the secreted. The enzyme catalyses Selective cleavage of Arg-|-Ile bond in factor X to form factor Xa.. Functionally, initiates the extrinsic pathway of blood coagulation. Serine protease that circulates in the blood in a zymogen form. Factor VII is converted to factor VIIa by factor Xa, factor XIIa, factor IXa, or thrombin by minor proteolysis. In the presence of tissue factor and calcium ions, factor VIIa then converts factor X to factor Xa by limited proteolysis. Factor VIIa also converts factor IX to factor IXa in the presence of tissue factor and calcium. This is Coagulation factor VII (F7) from Pan troglodytes (Chimpanzee).